Reading from the N-terminus, the 148-residue chain is Protein-arginine-phosphatase (148 aa).

C9 acts as the Nucleophile in catalysis. Position 10 to 15 (T10 to R15) interacts with substrate. R15 is a catalytic residue. The active-site Proton donor is the D117.

It belongs to the low molecular weight phosphotyrosine protein phosphatase family. As to quaternary structure, is present in solution as a mixture of monomers, dimers and higher order oligomers (trimers and tetramers).

The enzyme catalyses N(omega)-phospho-L-arginyl-[protein] + H2O = L-arginyl-[protein] + phosphate. Its activity is regulated as follows. Irreversibly inhibited by the synthetic inhibitor cyc-SeCN-amidine, which inactivates the enzyme by inducing disulfide bond formation between the two active site cysteine residues Cys-9 and Cys-14. Catalyzes the specific dephosphorylation of phosphoarginine residues in proteins. Probably counteracts the protein arginine kinase McsB in vivo. Exhibits almost no activity against pTyr peptides. Protein arginine phosphorylation has a physiologically important role and is involved in the regulation of many critical cellular processes, such as protein homeostasis, motility, competence, and stringent and stress responses, by regulating gene expression and protein activity. The sequence is that of Protein-arginine-phosphatase (ywle) from Geobacillus stearothermophilus (Bacillus stearothermophilus).